Consider the following 193-residue polypeptide: Thioredoxin M4, chloroplastic (193 aa).

Residues 1–82 constitute a chloroplast transit peptide; that stretch reads MASLLDSVTV…RIACEAQDTT (82 aa). Residues 83 to 192 form the Thioredoxin domain; sequence AAAVEVPNLS…LEKTIERFLV (110 aa). Active-site nucleophile residues include Cys116 and Cys119. Cys116 and Cys119 are disulfide-bonded.

It belongs to the thioredoxin family. Plant M-type subfamily.

The protein resides in the plastid. The protein localises to the chloroplast stroma. In terms of biological role, thiol-disulfide oxidoreductase involved in the redox regulation of enzyme of the oxidative pentose phosphate pathway. Under reducing conditions, inhibits the glucose-6-phosphate dehydrogenase. The protein is Thioredoxin M4, chloroplastic of Arabidopsis thaliana (Mouse-ear cress).